Consider the following 568-residue polypeptide: Multidrug and toxin extrusion protein 1 (568 aa).

Met1 is modified (N-acetylmethionine). The Cytoplasmic portion of the chain corresponds to 1-36 (MEAPVELGPGGRQASPERRHWLRCLVLSDFREELRA). A helical transmembrane segment spans residues 37-57 (LLVLACPAFLAQLMVFLISFV). Residues 58–71 (SSVFCGHLSKLELN) lie on the Extracellular side of the membrane. The helical transmembrane segment at 72 to 92 (AVTLAIAVINVMGVSVGFGLS) threads the bilayer. Residues 93 to 119 (SACDTLISQTYGSRNLKHVGVILQRGS) lie on the Cytoplasmic side of the membrane. The chain crosses the membrane as a helical span at residues 120–140 (LILLLCCLPCWALFLNTQHIL). Over 141-151 (LLFRQDPAVSR) the chain is Extracellular. A helical transmembrane segment spans residues 152-172 (LTQTYVTIFIPALPATFLYTL). The Cytoplasmic portion of the chain corresponds to 173–175 (QVK). A helical transmembrane segment spans residues 176 to 196 (YLLNQGIVLPQVVTGVAANLV). Topologically, residues 197–214 (NALANYLFVYQLHLGVMG) are extracellular. A helical membrane pass occupies residues 215-235 (SALANTVAQFTLALLLFLYIL). Residues 236–255 (RSKVYQATWGGWSLECLQDW) lie on the Cytoplasmic side of the membrane. Residues 256–278 (ASFFRLAIPSMLMLCMEWWAYEI) traverse the membrane as a helical segment. Residues 279–294 (GSFLSGILGMVELGAQ) lie on the Extracellular side of the membrane. Residues 295–315 (SVTYELAVIVYMIPMGLSVAV) form a helical membrane-spanning segment. The Cytoplasmic segment spans residues 316–335 (NVRVGNALGAGNIEQAKKSS). A helical transmembrane segment spans residues 336-356 (AVALLVTELIAVVFCVMLLSC). The Extracellular segment spans residues 357-369 (KDLVGYIFTSDRD). Residues 370–390 (IIALVAQVTPIYAVSHLFESL) form a helical membrane-spanning segment. The Cytoplasmic portion of the chain corresponds to 391-407 (AGTSGGILRGSGNQKFG). The chain crosses the membrane as a helical span at residues 408–430 (AIVNAIGYYVVGLPIGIALMFAA). Over 431 to 433 (KLG) the chain is Extracellular. A helical membrane pass occupies residues 434–456 (VIGLWLGIVVCAVSQAVCFLGFI). Over 457 to 544 (ARLNWTKACQ…LSGKQLALRR (88 aa)) the chain is Cytoplasmic. The chain crosses the membrane as a helical span at residues 545–565 (GLLLLGVILVLLAGILVKVYV). At 566–568 (RTQ) the chain is on the extracellular side.

Belongs to the multi antimicrobial extrusion (MATE) (TC 2.A.66.1) family. Predominantly expressed in kidney and liver.

It is found in the cell membrane. The protein resides in the apical cell membrane. It carries out the reaction thiamine(out) + H(+)(in) = thiamine(in) + H(+)(out). The enzyme catalyses estrone 3-sulfate(in) + H(+)(out) = estrone 3-sulfate(out) + H(+)(in). The catalysed reaction is creatinine(in) + H(+)(out) = creatinine(out) + H(+)(in). It catalyses the reaction agmatine(in) + H(+)(out) = agmatine(out) + H(+)(in). Its function is as follows. Multidrug efflux pump that functions as a H(+)/organic cation antiporter. Plays a physiological role in the excretion of cationic compounds including endogenous metabolites, drugs, toxins through the kidney and liver, into urine and bile respectively. Mediates the efflux of endogenous compounds such as creatinine, vitamin B1/thiamine, agmatine and estrone-3-sulfate. May also contribute to regulate the transport of cationic compounds in testis across the blood-testis-barrier. In Oryctolagus cuniculus (Rabbit), this protein is Multidrug and toxin extrusion protein 1 (SLC47A1).